Consider the following 808-residue polypeptide: DNA gyrase subunit B (808 aa).

The Toprim domain occupies 429-544 (SELFIVEGDS…KGYLYIAQPP (116 aa)). Mg(2+)-binding residues include Glu-435, Asp-509, and Asp-511.

Belongs to the type II topoisomerase GyrB family. In terms of assembly, heterotetramer, composed of two GyrA and two GyrB chains. In the heterotetramer, GyrA contains the active site tyrosine that forms a transient covalent intermediate with DNA, while GyrB binds cofactors and catalyzes ATP hydrolysis. Mg(2+) serves as cofactor. It depends on Mn(2+) as a cofactor. Ca(2+) is required as a cofactor.

The protein localises to the cytoplasm. The catalysed reaction is ATP-dependent breakage, passage and rejoining of double-stranded DNA.. Its function is as follows. A type II topoisomerase that negatively supercoils closed circular double-stranded (ds) DNA in an ATP-dependent manner to modulate DNA topology and maintain chromosomes in an underwound state. Negative supercoiling favors strand separation, and DNA replication, transcription, recombination and repair, all of which involve strand separation. Also able to catalyze the interconversion of other topological isomers of dsDNA rings, including catenanes and knotted rings. Type II topoisomerases break and join 2 DNA strands simultaneously in an ATP-dependent manner. In Rickettsia felis (strain ATCC VR-1525 / URRWXCal2) (Rickettsia azadi), this protein is DNA gyrase subunit B.